A 179-amino-acid chain; its full sequence is uncharacterized protein (179 aa).

A disordered region spans residues 27–54 (TAKKSRVQAREARAAVEENKKAQLERDK).

This is an uncharacterized protein from Escherichia coli (strain K12).